We begin with the raw amino-acid sequence, 452 residues long: MQRRIMGIETEFGVTCTFHGHRRLSPDEVARYLFRRVVSWGRSSNVFLRNGARLYLDVGSHPEYATAECDSLTQLVTHDRAGERVLEDLLIDAEQRLADEGIGGDIYLFKNNTDSAGNSYGCHENYLIVRAGEFSRISDVLLPFLVTRQLICGAGKVLQTPKAATFCLSQRAEHIWEGVSSATTRSRPIINTRDEPHADAEKYRRLHVIVGDSNMSESTTMLKVGSASLVLEMIEAGVAFRDFSLDNPIRAIREVSHDLTGRRPVRLAGGRQASALDIQREYYARAVEYLQTREPNTQIEQVVDLWGRQLDAVESQDFAKVDTEIDWVIKRKLFQRYQDRYNMELSDPKISQLDLAYHDIKRGRGVFDLLQRKGLAARITTDEEIEAAVNTPPQTTRAKLRGEFISAAQEAGRDFTVDWVHLKLNDQAQRTVLCKDPFRSVDERVKRLIASM.

E9 serves as a coordination point for Mg(2+). Residue R53 participates in ATP binding. Y55 contributes to the Mg(2+) binding site. D57 serves as the catalytic Proton acceptor. E63 provides a ligand contact to Mg(2+). The ATP site is built by T66 and W419.

This sequence belongs to the Pup ligase/Pup deamidase family. Pup-conjugating enzyme subfamily.

The catalysed reaction is ATP + [prokaryotic ubiquitin-like protein]-L-glutamate + [protein]-L-lysine = ADP + phosphate + N(6)-([prokaryotic ubiquitin-like protein]-gamma-L-glutamyl)-[protein]-L-lysine.. Its pathway is protein degradation; proteasomal Pup-dependent pathway. It participates in protein modification; protein pupylation. Functionally, catalyzes the covalent attachment of the prokaryotic ubiquitin-like protein modifier Pup to the proteasomal substrate proteins, thereby targeting them for proteasomal degradation. This tagging system is termed pupylation. The ligation reaction involves the side-chain carboxylate of the C-terminal glutamate of Pup and the side-chain amino group of a substrate lysine. This is Pup--protein ligase from Mycolicibacterium vanbaalenii (strain DSM 7251 / JCM 13017 / BCRC 16820 / KCTC 9966 / NRRL B-24157 / PYR-1) (Mycobacterium vanbaalenii).